The primary structure comprises 131 residues: Large ribosomal subunit protein bL12 (131 aa).

Belongs to the bacterial ribosomal protein bL12 family. Homodimer. Part of the ribosomal stalk of the 50S ribosomal subunit. Forms a multimeric L10(L12)X complex, where L10 forms an elongated spine to which 2 to 4 L12 dimers bind in a sequential fashion. Binds GTP-bound translation factors.

Forms part of the ribosomal stalk which helps the ribosome interact with GTP-bound translation factors. Is thus essential for accurate translation. In Prochlorococcus marinus (strain MIT 9215), this protein is Large ribosomal subunit protein bL12.